A 278-amino-acid chain; its full sequence is Undecaprenyl-diphosphatase 1 (278 aa).

7 consecutive transmembrane segments (helical) span residues Val46–Phe66, Tyr91–Ala111, Leu119–Ala139, Ser153–Phe173, Val191–Tyr211, Pro225–Leu245, and Phe256–Ile276.

The protein belongs to the UppP family.

The protein localises to the cell membrane. It carries out the reaction di-trans,octa-cis-undecaprenyl diphosphate + H2O = di-trans,octa-cis-undecaprenyl phosphate + phosphate + H(+). Its function is as follows. Catalyzes the dephosphorylation of undecaprenyl diphosphate (UPP). Confers resistance to bacitracin. The polypeptide is Undecaprenyl-diphosphatase 1 (Frankia alni (strain DSM 45986 / CECT 9034 / ACN14a)).